Here is a 545-residue protein sequence, read N- to C-terminus: Betaine receptor acr-23 (545 aa).

The first 19 residues, 1–19 (MHRIYTFLIFISQLALGLS), serve as a signal peptide directing secretion. At 20–244 (NNPDIPIQYE…DVVIQRKPLY (225 aa)) the chain is on the extracellular side. 2 N-linked (GlcNAc...) asparagine glycosylation sites follow: Asn-53 and Asn-97. 2 cysteine pairs are disulfide-bonded: Cys-157–Cys-171 and Cys-224–Cys-225. Asn-228 carries N-linked (GlcNAc...) asparagine glycosylation. The chain crosses the membrane as a helical span at residues 245-265 (YVLNLIAPTAVITFISIIGFF). N-linked (GlcNAc...) asparagine glycosylation is present at Asn-276. Transmembrane regions (helical) follow at residues 287 to 307 (EKITLGITTLLSMSIMIFMVS) and 317 to 337 (VPLIALFYTLMITIISVGTLA). The Cytoplasmic segment spans residues 338–512 (ASSVIFVQKL…WDWVAAVLER (175 aa)). A helical transmembrane segment spans residues 513–533 (VFLIFFTICFLFSAIGINLYG).

Belongs to the ligand-gated ion channel (TC 1.A.9) family. Acetylcholine receptor (TC 1.A.9.1) subfamily. In terms of tissue distribution, expressed in the body wall muscles that are arranged into four longitudinal bundles, some mechanosensory neurons, the head muscles and multiple interneurons. Not expressed in motor neurons (at protein level).

It localises to the cell membrane. In terms of biological role, betaine receptor that functions as a ligand-gated non-selective monovalent cation channel in mechanosensory neurons to maintain basal levels of locomotion. The channel is permeable to Na(+) and K(+) but not to Ba(2+) or Ca(2+) ions. Elicits current in response to betaine, very weak current in response to choline, virtually no current in response to acetylcholine and nicotine, and no current in response to glycine and GABA. In Caenorhabditis elegans, this protein is Betaine receptor acr-23.